Consider the following 59-residue polypeptide: Large ribosomal subunit protein uL30 (59 aa).

Belongs to the universal ribosomal protein uL30 family. Part of the 50S ribosomal subunit.

The protein is Large ribosomal subunit protein uL30 of Sulfurihydrogenibium sp. (strain YO3AOP1).